The primary structure comprises 125 residues: Allatostatin (125 aa).

A signal peptide spans M1 to A26. Positions A27–D106 are excised as a propeptide. The residue at position 109 (Q109) is a Pyrrolidone carboxylic acid.

This sequence belongs to the allatostatin family.

It is found in the secreted. In terms of biological role, strongly inhibits juvenile hormone biosynthesis in vitro by the corpora allata from fifth-stadium larvae and adult females. The chain is Allatostatin from Spodoptera frugiperda (Fall armyworm).